A 716-amino-acid chain; its full sequence is MTVQLTDDAYAVLEGRHADPFRYLGPHPEDDRVVVRALLPDATAVEAVGEHGETAILERVHDAGLFAGPLPNGSHRYQLRARFGDTTVDLEDPYRFPPILTEFDLYLLGEGTDQRLYDKLGAHPMVLEGVRGVGFVVLAPNARRVSVVGDFNFWNPRRHQMRVRGNGYWELFIPGATAGDHYKFDMTGPNGETLPQKSDPMAFAAEMRPKTASIVVDQTRLPLPRPAPDNINALGAPMSIYEVHLGSWRRKDGEQWLTYRELAEQLPAYVRDMGFTHVEFLPVSEHPFDGSWGYQPTGLFAPTSRFGTPEDFCALIDACHEHGIGVLLDWVPGHFPDDPHGLGNFDGTALYEHANPLQGRHLDWGTLIYNYGRTEVVNFLVSNALFWLERYRIDGLRVDAVASMLYLDYSRPAGGWIPNKFGGRENIEAIDFLRRFNAEVYAKFPQATTAAEESTAWPQVSRPVEFGGLGFGYKWNMGWMHDTLNYISKDPIHRKYHHGQILFGLHYAFSENFILPLSHDEVVHGKRSILGRMPGDEWQRFANLRAYYAFMFAHPGKKLMFMGSEFGQEREWNHDRSLDWHLLDTPKYAGIQALVRDLNRLYRDLPALHQLDCDPFGFEWIITEDAARNVFAWMRKGNDTRARCLVIVNFSPNVYQDYRVRVPFPGRWREVLNSDAAIYGGSNVGNAGEVRTLEGLVPELSLNIPPLAAIFLKPED.

The Nucleophile role is filled by aspartate 399. The Proton donor role is filled by glutamate 452.

Belongs to the glycosyl hydrolase 13 family. GlgB subfamily. Monomer.

The catalysed reaction is Transfers a segment of a (1-&gt;4)-alpha-D-glucan chain to a primary hydroxy group in a similar glucan chain.. It participates in glycan biosynthesis; glycogen biosynthesis. Functionally, catalyzes the formation of the alpha-1,6-glucosidic linkages in glycogen by scission of a 1,4-alpha-linked oligosaccharide from growing alpha-1,4-glucan chains and the subsequent attachment of the oligosaccharide to the alpha-1,6 position. The protein is 1,4-alpha-glucan branching enzyme GlgB of Rhodopseudomonas palustris (strain HaA2).